The sequence spans 476 residues: Glycogen synthase (476 aa).

Lysine 15 is a binding site for ADP-alpha-D-glucose.

It belongs to the glycosyltransferase 1 family. Bacterial/plant glycogen synthase subfamily.

It carries out the reaction [(1-&gt;4)-alpha-D-glucosyl](n) + ADP-alpha-D-glucose = [(1-&gt;4)-alpha-D-glucosyl](n+1) + ADP + H(+). The protein operates within glycan biosynthesis; glycogen biosynthesis. Functionally, synthesizes alpha-1,4-glucan chains using ADP-glucose. The protein is Glycogen synthase of Streptococcus equi subsp. equi (strain 4047).